The chain runs to 310 residues: tRNA dimethylallyltransferase (310 aa).

13 to 20 (GPTASGKT) contacts ATP. Position 15 to 20 (15 to 20 (TASGKT)) interacts with substrate. Interaction with substrate tRNA stretches follow at residues 38–41 (DSAL), 162–166 (QRLSR), 243–248 (RCVGYR), and 276–283 (KRQITWLR).

It belongs to the IPP transferase family. In terms of assembly, monomer. Mg(2+) is required as a cofactor.

The enzyme catalyses adenosine(37) in tRNA + dimethylallyl diphosphate = N(6)-dimethylallyladenosine(37) in tRNA + diphosphate. In terms of biological role, catalyzes the transfer of a dimethylallyl group onto the adenine at position 37 in tRNAs that read codons beginning with uridine, leading to the formation of N6-(dimethylallyl)adenosine (i(6)A). The sequence is that of tRNA dimethylallyltransferase from Vibrio parahaemolyticus serotype O3:K6 (strain RIMD 2210633).